The sequence spans 662 residues: UvrABC system protein B (662 aa).

The 158-residue stretch at 25-182 (KGIEKGEKFQ…KKLVEIQYER (158 aa)) folds into the Helicase ATP-binding domain. Residue 38–45 (GVTGSGKT) participates in ATP binding. The Beta-hairpin motif lies at 91-114 (YYDYYQPEAYVAQSDTYIEKDASI). Positions 429–595 (QIDDLYTSIQ…TIIKDIREVI (167 aa)) constitute a Helicase C-terminal domain. Residues 622 to 657 (DKLIEKYEEEMREAAQNLQFEKAAHLRDVIYKLKRD) form the UVR domain.

The protein belongs to the UvrB family. In terms of assembly, forms a heterotetramer with UvrA during the search for lesions. Interacts with UvrC in an incision complex.

Its subcellular location is the cytoplasm. The UvrABC repair system catalyzes the recognition and processing of DNA lesions. A damage recognition complex composed of 2 UvrA and 2 UvrB subunits scans DNA for abnormalities. Upon binding of the UvrA(2)B(2) complex to a putative damaged site, the DNA wraps around one UvrB monomer. DNA wrap is dependent on ATP binding by UvrB and probably causes local melting of the DNA helix, facilitating insertion of UvrB beta-hairpin between the DNA strands. Then UvrB probes one DNA strand for the presence of a lesion. If a lesion is found the UvrA subunits dissociate and the UvrB-DNA preincision complex is formed. This complex is subsequently bound by UvrC and the second UvrB is released. If no lesion is found, the DNA wraps around the other UvrB subunit that will check the other stand for damage. The polypeptide is UvrABC system protein B (Clostridium botulinum (strain 657 / Type Ba4)).